Here is a 319-residue protein sequence, read N- to C-terminus: Probable carboxylesterase 5 (319 aa).

N-acetylmethionine is present on M1. Positions 79–81 (HGG) match the Involved in the stabilization of the negatively charged intermediate by the formation of the oxyanion hole motif. Residues S163, D262, and H294 contribute to the active site.

The protein belongs to the 'GDXG' lipolytic enzyme family. As to expression, expressed in roots, leaves, stems, flowers and siliques.

The enzyme catalyses a carboxylic ester + H2O = an alcohol + a carboxylate + H(+). Carboxylesterase acting on esters with varying acyl chain length. In Arabidopsis thaliana (Mouse-ear cress), this protein is Probable carboxylesterase 5 (CXE5).